The following is a 249-amino-acid chain: Expansin-A19 (249 aa).

The first 21 residues, 1 to 21 (MGNIFLQLLAVVALCIAPARS), serve as a signal peptide directing secretion. An Expansin-like EG45 domain is found at 41 to 154 (GGACGYGNLY…QQVKCWRYGG (114 aa)). 2 N-linked (GlcNAc...) asparagine glycosylation sites follow: Asn-116 and Asn-216. The 80-residue stretch at 164-243 (YFELVLVTNM…GWSFGQTFST (80 aa)) folds into the Expansin-like CBD domain.

The protein belongs to the expansin family. Expansin A subfamily.

It is found in the secreted. The protein localises to the cell wall. Its subcellular location is the membrane. In terms of biological role, may cause loosening and extension of plant cell walls by disrupting non-covalent bonding between cellulose microfibrils and matrix glucans. No enzymatic activity has been found. May be required for rapid internodal elongation in deepwater rice during submergence. The sequence is that of Expansin-A19 (EXPA19) from Oryza sativa subsp. japonica (Rice).